The primary structure comprises 214 residues: Late embryogenesis abundant protein At1g64065 (214 aa).

Residues 41 to 61 (VYSLTIIVIIFALCLILSSIF) traverse the membrane as a helical segment.

It belongs to the LEA type 2 family.

The protein localises to the membrane. In Arabidopsis thaliana (Mouse-ear cress), this protein is Late embryogenesis abundant protein At1g64065.